The sequence spans 318 residues: Olfactory receptor 52D1 (318 aa).

Residues 1-28 are Extracellular-facing; sequence MSDSNLSDNHLPDTFFLTGIPGLEAAHF. A glycan (N-linked (GlcNAc...) asparagine) is linked at N5. Residues 29 to 49 form a helical membrane-spanning segment; it reads WIAIPFCAMYLVALVGNAALI. Residues 50–57 are Cytoplasmic-facing; it reads LVIAMDNA. A helical transmembrane segment spans residues 58 to 78; sequence LHAPMYLFLCLLSLTDLALSS. At 79–102 the chain is on the extracellular side; the sequence is TTVPKMLAILWLHAGEISFGGCLA. A disulfide bridge links C100 with C192. The chain crosses the membrane as a helical span at residues 103-123; sequence QMFCVHSIYALESSILLAMAF. At 124 to 142 the chain is on the cytoplasmic side; the sequence is DRYVAICNPLRYTTILNHA. The helical transmembrane segment at 143-163 threads the bilayer; the sequence is VIGRIGFVGLFRSVAIVSPFI. The Extracellular segment spans residues 164–199; that stretch reads FLLRRLPYCGHRVMTHTYCEHMGIARLACANITVNI. The helical transmembrane segment at 200–220 threads the bilayer; sequence VYGLTVALLAMGLDSILIAIS. At 221-240 the chain is on the cytoplasmic side; sequence YGFILHAVFHLPSHDAQHKA. The helical transmembrane segment at 241 to 261 threads the bilayer; the sequence is LSTCGSHIGIILVFYIPAFFS. Topologically, residues 262-277 are extracellular; that stretch reads FLTHRFGHHEVPKHVH. The helical transmembrane segment at 278–298 threads the bilayer; it reads IFLANLYVLVPPVLNPILYGA. At 299 to 318 the chain is on the cytoplasmic side; the sequence is RTKEIRSRLLKLLHLGKTSI.

Belongs to the G-protein coupled receptor 1 family.

It is found in the cell membrane. In terms of biological role, odorant receptor. The protein is Olfactory receptor 52D1 (OR52D1) of Homo sapiens (Human).